A 476-amino-acid polypeptide reads, in one-letter code: UPF0481 protein At3g47200 (476 aa).

The tract at residues 1 to 24 is disordered; it reads MADKTDIISSSSDKASPPPPSAFR. The next 2 helical transmembrane spans lie at 133 to 153 and 439 to 459; these read LMFM…IMSG and AVLF…LSYL.

Belongs to the UPF0481 family.

The protein localises to the membrane. The chain is UPF0481 protein At3g47200 from Arabidopsis thaliana (Mouse-ear cress).